We begin with the raw amino-acid sequence, 406 residues long: Arginine biosynthesis bifunctional protein ArgJ (406 aa).

T152, K179, T190, E277, N401, and S406 together coordinate substrate. Catalysis depends on T190, which acts as the Nucleophile.

The protein belongs to the ArgJ family. Heterotetramer of two alpha and two beta chains.

The protein resides in the cytoplasm. It carries out the reaction N(2)-acetyl-L-ornithine + L-glutamate = N-acetyl-L-glutamate + L-ornithine. The catalysed reaction is L-glutamate + acetyl-CoA = N-acetyl-L-glutamate + CoA + H(+). The protein operates within amino-acid biosynthesis; L-arginine biosynthesis; L-ornithine and N-acetyl-L-glutamate from L-glutamate and N(2)-acetyl-L-ornithine (cyclic): step 1/1. It participates in amino-acid biosynthesis; L-arginine biosynthesis; N(2)-acetyl-L-ornithine from L-glutamate: step 1/4. In terms of biological role, catalyzes two activities which are involved in the cyclic version of arginine biosynthesis: the synthesis of N-acetylglutamate from glutamate and acetyl-CoA as the acetyl donor, and of ornithine by transacetylation between N(2)-acetylornithine and glutamate. In Neisseria gonorrhoeae, this protein is Arginine biosynthesis bifunctional protein ArgJ.